We begin with the raw amino-acid sequence, 337 residues long: MDEGFELRLIEALQPVRGFALAQGIYHLFNSGLYERLADGPQEVPGMSASLGLDASRTSGFLRYLANENYLALSGDTVALTEKGRALGPYRPWYELLVGGYAETFQQITDVLNGKGYATRDGRLVGIGSCGMSAYDALPLVRELMSDLPAAPASVVDLGCGDGTFLAGLVDGSGTVTGIGIDPYAPEESPAEGLRFVRSGATDYLREADTPESGPDSSQICLAAFLLQEVLEQEGRGAVVELVRAALRRSGHLAVVEVDHRPADPQVMRHGLGLAYYNPYYLLHVLTEQRLESDAFWRELFQEAGARVVTRRVADPRVDSTGLEVGYLLTRREGAAQ.

The protein belongs to the 2-ketoarginine methyltransferase family.

It carries out the reaction 5-guanidino-2-oxopentanoate + S-adenosyl-L-methionine = (3R)-5-guanidino-3-methyl-2-oxopentanoate + S-adenosyl-L-homocysteine + H(+). It functions in the pathway antibiotic biosynthesis. Functionally, S-adenosyl-L-methionine-dependent methyltransferase involved in the formation of the rare amino acid 3-methylarginine (MeArg), which is incorporated into the peptidyl nucleoside antibiotic arginomycin. Transfers the methyl group from S-adenosyl-L-methionine into 5-guanidino-2-oxopentanoate acid to yield 5-guanidino-3-methyl-2-oxopentanoate, a precursor of MeArg. This chain is 2-ketoarginine methyltransferase, found in Streptomyces arginensis.